The primary structure comprises 154 residues: Ribonuclease H (154 aa).

The 142-residue stretch at 7–148 (KPETVEIYTD…ADALAREGIA (142 aa)) folds into the RNase H type-1 domain. The Mg(2+) site is built by Asp16, Glu54, Asp76, and Asp140.

The protein belongs to the RNase H family. In terms of assembly, monomer. The cofactor is Mg(2+).

The protein localises to the cytoplasm. It catalyses the reaction Endonucleolytic cleavage to 5'-phosphomonoester.. In terms of biological role, endonuclease that specifically degrades the RNA of RNA-DNA hybrids. This chain is Ribonuclease H, found in Paramagnetospirillum magneticum (strain ATCC 700264 / AMB-1) (Magnetospirillum magneticum).